Reading from the N-terminus, the 416-residue chain is Putative pseudouridine transporter (416 aa).

The Periplasmic portion of the chain corresponds to 1–2 (MD). The helical transmembrane segment at 3–23 (IMRSVVGMVVLLAIAFLLSVN) threads the bilayer. Residues 24–31 (KKSISLRT) lie on the Cytoplasmic side of the membrane. A helical membrane pass occupies residues 32-52 (VGAALLLQIAIGGIMLYFPPG). Topologically, residues 53-104 (KWAVEQAALGVHKVMSYSDAGSAFIFGSLVGPKMDVLFDGAGFIFAFRVLPA) are periplasmic. The helical transmembrane segment at 105-125 (IIFVTALISLLYYIGVMGLLI) threads the bilayer. Over 126–172 (RILGSIFQKALNISKIESFVAVTTIFLGQNEIPAIVKPFIDRMNRNE) the chain is Cytoplasmic. A helical membrane pass occupies residues 173-193 (LFTAICSGMASIAGSMMIGYA). At 194–196 (GMG) the chain is on the periplasmic side. Residues 197–217 (VPIDYLLAASLMAIPGGILFA) traverse the membrane as a helical segment. Residues 218–268 (RILSPATEPSQVTFENLSFSETPPKSFIEAAASGAMTGLKIAAGVATVVMA) are Cytoplasmic-facing. A helical transmembrane segment spans residues 269–289 (FVAIIALINGIIGGIGGWFGF). Residues 290–352 (ANASLESIFG…QTGGTLEVKT (63 aa)) are Periplasmic-facing. The chain crosses the membrane as a helical span at residues 353 to 373 (IAIISFALCGFANFGSIGVVV). At 374 to 394 (GAFSAISPKRAPEIAQLGLRA) the chain is on the cytoplasmic side. The chain crosses the membrane as a helical span at residues 395 to 415 (LAAATLSNLMSATIAGFFIGL). Ala416 is a topological domain (periplasmic).

Belongs to the concentrative nucleoside transporter (CNT) (TC 2.A.41) family.

It localises to the cell inner membrane. Its function is as follows. Could be involved in pseudouridine transport. The chain is Putative pseudouridine transporter (psuT) from Escherichia coli (strain K12).